Consider the following 115-residue polypeptide: Pancreatic progenitor cell differentiation and proliferation factor (115 aa).

Ser-9 is subject to Phosphoserine. Disordered stretches follow at residues 21 to 46 (LGSS…SPGL) and 73 to 115 (ESPE…RDLS). The segment covering 22-32 (GSSSSSSSGGS) has biased composition (low complexity). Positions 106–115 (SGQTNPRDLS) are enriched in polar residues.

It belongs to the PPDPF family.

Functionally, probable regulator of exocrine pancreas development. The chain is Pancreatic progenitor cell differentiation and proliferation factor (Ppdpf) from Mus musculus (Mouse).